Here is a 447-residue protein sequence, read N- to C-terminus: MKVTDKKIEGCQASITVEMDSTEVEEGLSKTYRRLVKKVEIPGFRKGKAPRDVFEKYVSREKMLDELVDDIVPEACQKAIQDEEIKPFATPKVAMVTTDPFVFSARIPLPPVVELGDYKTIRATKETVEIAEENIDTVVDQVLHQRATWETAERPVKMGDMLLMQVESTLNGEPYLNREDMQYSVREEAIYPAPGFGGYLVDMVAGEPKEFSIVFPEDHARAELAGKTAAFKVTVREIKEEKLPELNDAFAHELNPEFNTLSELRQRIRENMQDRQDDKAQAKFEDQIVEALIKMSKIDYPEVMVEAELDQIIEQQLQRLQSNVKSPEEFRAMLSQMTPEDMQQRYRPLAEQRVASSLALGKLATTENLVPNDEEVDAEIEKLITDAGDKKEEEKALYNQPETRGRLIQLLTARKTMAFIDEIALQPALEAVESKADEDEKTEEADK.

The region spanning glycine 159–proline 244 is the PPIase FKBP-type domain.

The protein belongs to the FKBP-type PPIase family. Tig subfamily.

Its subcellular location is the cytoplasm. It catalyses the reaction [protein]-peptidylproline (omega=180) = [protein]-peptidylproline (omega=0). Involved in protein export. Acts as a chaperone by maintaining the newly synthesized protein in an open conformation. Functions as a peptidyl-prolyl cis-trans isomerase. This Dehalococcoides mccartyi (strain ATCC BAA-2100 / JCM 16839 / KCTC 5957 / BAV1) protein is Trigger factor.